Consider the following 325-residue polypeptide: Eukaryotic translation initiation factor 3 subunit I (325 aa).

WD repeat units follow at residues 8–47 (GHER…RLGT), 50–89 (GHTG…QLAL), 144–183 (CSES…VLKK), 186–225 (EHTK…HVKT), and 283–324 (GHFG…FELE).

This sequence belongs to the eIF-3 subunit I family. In terms of assembly, component of the eukaryotic translation initiation factor 3 (eIF-3) complex, which is composed of 13 subunits: eif3a, eif3b, eif3c, eif3d, eif3e, eif3f, eif3g, eif3h, eif3i, eif3j, eif3k, eif3l and eif3m.

The protein resides in the cytoplasm. Its function is as follows. Component of the eukaryotic translation initiation factor 3 (eIF-3) complex, which is involved in protein synthesis of a specialized repertoire of mRNAs and, together with other initiation factors, stimulates binding of mRNA and methionyl-tRNAi to the 40S ribosome. The eIF-3 complex specifically targets and initiates translation of a subset of mRNAs involved in cell proliferation. In Danio rerio (Zebrafish), this protein is Eukaryotic translation initiation factor 3 subunit I (eif3i).